A 288-amino-acid chain; its full sequence is Diaminopimelate epimerase (288 aa).

Asparagine 14 and asparagine 67 together coordinate substrate. The active-site Proton donor is the cysteine 76. Substrate-binding positions include 77–78, asparagine 166, asparagine 199, and 217–218; these read GN and ER. Cysteine 226 (proton acceptor) is an active-site residue. 227–228 contributes to the substrate binding site; that stretch reads GT.

It belongs to the diaminopimelate epimerase family. In terms of assembly, homodimer.

It localises to the cytoplasm. The catalysed reaction is (2S,6S)-2,6-diaminopimelate = meso-2,6-diaminopimelate. It functions in the pathway amino-acid biosynthesis; L-lysine biosynthesis via DAP pathway; DL-2,6-diaminopimelate from LL-2,6-diaminopimelate: step 1/1. Catalyzes the stereoinversion of LL-2,6-diaminopimelate (L,L-DAP) to meso-diaminopimelate (meso-DAP), a precursor of L-lysine and an essential component of the bacterial peptidoglycan. The polypeptide is Diaminopimelate epimerase (Bacillus thuringiensis (strain Al Hakam)).